We begin with the raw amino-acid sequence, 354 residues long: COP9 signalosome complex subunit 5 (354 aa).

The MPN domain maps to 56-193 (VLVSSIALVK…IGAFRTYPKD (138 aa)). Zn(2+)-binding residues include His-139, His-141, and Asp-152. A JAMM motif motif is present at residues 139 to 152 (HSHPGYGCWLSGID). The segment at 193–212 (DYKPPKKATKQNQDQSVPLS) is disordered.

This sequence belongs to the peptidase M67A family. CSN5 subfamily. In terms of assembly, component of the COP9 signalosome (CSN) complex.

The protein localises to the cytoplasm. The protein resides in the nucleus. In terms of biological role, catalytic Component of the COP9 signalosome (CSN) complex that acts as an regulator of the ubiquitin (Ubl) conjugation pathway by mediating the deneddylation of the cullin subunit of SCF-type E3 ubiquitin-protein ligase complexes. This chain is COP9 signalosome complex subunit 5 (RRI1), found in Yarrowia lipolytica (strain CLIB 122 / E 150) (Yeast).